The primary structure comprises 449 residues: Jacalin-related lectin 20 (449 aa).

2 disordered regions span residues M1–A20 and A294–G314. A2 is subject to N-acetylalanine. 3 Jacalin-type lectin domains span residues A2–P144, P147–A294, and T303–P446.

It belongs to the jacalin lectin family.

This Arabidopsis thaliana (Mouse-ear cress) protein is Jacalin-related lectin 20 (JAL20).